Consider the following 348-residue polypeptide: Holliday junction branch migration complex subunit RuvB (348 aa).

The interval 1-183 (MTEASRIVAP…FGIPVRLNFY (183 aa)) is large ATPase domain (RuvB-L). ATP is bound by residues Leu-22, Arg-23, Gly-64, Lys-67, Thr-68, Thr-69, 130 to 132 (EDF), Arg-173, Tyr-183, and Arg-220. Residue Thr-68 participates in Mg(2+) binding. The segment at 184-254 (TEDELEKIVS…VADHALGALE (71 aa)) is small ATPAse domain (RuvB-S). The head domain (RuvB-H) stretch occupies residues 257 to 348 (AAGLDAMDRR…SGLFGQDEDR (92 aa)). Positions 293, 312, and 317 each coordinate DNA. The tract at residues 329-348 (LTEPSRDPAQSGLFGQDEDR) is disordered.

It belongs to the RuvB family. Homohexamer. Forms an RuvA(8)-RuvB(12)-Holliday junction (HJ) complex. HJ DNA is sandwiched between 2 RuvA tetramers; dsDNA enters through RuvA and exits via RuvB. An RuvB hexamer assembles on each DNA strand where it exits the tetramer. Each RuvB hexamer is contacted by two RuvA subunits (via domain III) on 2 adjacent RuvB subunits; this complex drives branch migration. In the full resolvosome a probable DNA-RuvA(4)-RuvB(12)-RuvC(2) complex forms which resolves the HJ.

The protein localises to the cytoplasm. It catalyses the reaction ATP + H2O = ADP + phosphate + H(+). Functionally, the RuvA-RuvB-RuvC complex processes Holliday junction (HJ) DNA during genetic recombination and DNA repair, while the RuvA-RuvB complex plays an important role in the rescue of blocked DNA replication forks via replication fork reversal (RFR). RuvA specifically binds to HJ cruciform DNA, conferring on it an open structure. The RuvB hexamer acts as an ATP-dependent pump, pulling dsDNA into and through the RuvAB complex. RuvB forms 2 homohexamers on either side of HJ DNA bound by 1 or 2 RuvA tetramers; 4 subunits per hexamer contact DNA at a time. Coordinated motions by a converter formed by DNA-disengaged RuvB subunits stimulates ATP hydrolysis and nucleotide exchange. Immobilization of the converter enables RuvB to convert the ATP-contained energy into a lever motion, pulling 2 nucleotides of DNA out of the RuvA tetramer per ATP hydrolyzed, thus driving DNA branch migration. The RuvB motors rotate together with the DNA substrate, which together with the progressing nucleotide cycle form the mechanistic basis for DNA recombination by continuous HJ branch migration. Branch migration allows RuvC to scan DNA until it finds its consensus sequence, where it cleaves and resolves cruciform DNA. This is Holliday junction branch migration complex subunit RuvB from Nitrobacter winogradskyi (strain ATCC 25391 / DSM 10237 / CIP 104748 / NCIMB 11846 / Nb-255).